The sequence spans 612 residues: Dihydroxy-acid dehydratase (612 aa).

Aspartate 81 provides a ligand contact to Mg(2+). Residue cysteine 122 coordinates [2Fe-2S] cluster. Mg(2+) contacts are provided by aspartate 123 and lysine 124. Position 124 is an N6-carboxylysine (lysine 124). Position 193 (cysteine 193) interacts with [2Fe-2S] cluster. Residue glutamate 489 participates in Mg(2+) binding. The active-site Proton acceptor is the serine 515.

The protein belongs to the IlvD/Edd family. As to quaternary structure, homodimer. Requires [2Fe-2S] cluster as cofactor. Mg(2+) serves as cofactor.

It catalyses the reaction (2R)-2,3-dihydroxy-3-methylbutanoate = 3-methyl-2-oxobutanoate + H2O. The catalysed reaction is (2R,3R)-2,3-dihydroxy-3-methylpentanoate = (S)-3-methyl-2-oxopentanoate + H2O. It participates in amino-acid biosynthesis; L-isoleucine biosynthesis; L-isoleucine from 2-oxobutanoate: step 3/4. The protein operates within amino-acid biosynthesis; L-valine biosynthesis; L-valine from pyruvate: step 3/4. Its function is as follows. Functions in the biosynthesis of branched-chain amino acids. Catalyzes the dehydration of (2R,3R)-2,3-dihydroxy-3-methylpentanoate (2,3-dihydroxy-3-methylvalerate) into 2-oxo-3-methylpentanoate (2-oxo-3-methylvalerate) and of (2R)-2,3-dihydroxy-3-methylbutanoate (2,3-dihydroxyisovalerate) into 2-oxo-3-methylbutanoate (2-oxoisovalerate), the penultimate precursor to L-isoleucine and L-valine, respectively. This chain is Dihydroxy-acid dehydratase, found in Stenotrophomonas maltophilia (strain K279a).